A 79-amino-acid polypeptide reads, in one-letter code: Conotoxin VnMEKL-024 (79 aa).

A signal peptide spans 1–19 (MQKLTILLLVAAVLMSTQA). Residues 20-50 (LIRGGVEKRQEAKRNFFSKRKTTAESWWEGE) constitute a propeptide that is removed on maturation. Intrachain disulfides connect cysteine 51-cysteine 65, cysteine 58-cysteine 69, and cysteine 64-cysteine 76.

It belongs to the conotoxin O2 superfamily. As to expression, expressed by the venom duct.

It localises to the secreted. This is Conotoxin VnMEKL-024 from Conus ventricosus (Mediterranean cone).